The sequence spans 532 residues: [Pyruvate dehydrogenase [acetyl-transferring]]-phosphatase 2, mitochondrial (532 aa).

A mitochondrion-targeting transit peptide spans 1 to 69 (MSSTVSYWIF…FALRKAYRHT (69 aa)). One can recognise a PPM-type phosphatase domain in the interval 107–518 (NSVLRFESNQ…YRDDITVMVV (412 aa)). Residues aspartate 144, glycine 145, aspartate 415, and aspartate 511 each coordinate Mn(2+).

This sequence belongs to the PP2C family. The cofactor is Mg(2+).

Its subcellular location is the mitochondrion. It carries out the reaction O-phospho-L-seryl-[pyruvate dehydrogenase E1 alpha subunit] + H2O = L-seryl-[pyruvate dehydrogenase E1 alpha subunit] + phosphate. In terms of biological role, mitochondrial enzyme that catalyzes the dephosphorylation and concomitant reactivation of the alpha subunit of the E1 component of the pyruvate dehydrogenase complex (PDC), thereby stimulating the conversion of pyruvate into acetyl-CoA. Acts as a crucial regulator of T cell metabolism and function, with a particular focus on T-helper Th17. This Mus musculus (Mouse) protein is [Pyruvate dehydrogenase [acetyl-transferring]]-phosphatase 2, mitochondrial (Pdp2).